A 578-amino-acid polypeptide reads, in one-letter code: MKASRFFIGTLKEAPADAEIVSHKLMVRAGMIRRVAGGIYNYLPVGLRSIRKVEAIVREEMNRAGAIELLMPAVQPAELWQESGRWEQYGPELLRFKDRKDNDFVIGPTHEEVVTDIARNQIKSYRQMPVNFYQIQTKFRDEIRPRFGVMRGREFIMKDAYSFDKDTAGLNESYRKMYDAYVRIFTRLGLEFRAVAADSGSIGGNFSHEFHVIADTGEDAIAYCPTSDFAANIEAAEALPLIAARAAPAEAMEKVATPGKAKCEAVAELLAIPLERTIKSIVLATENEGAEPTIWLIMLRGDHDLNEIKVSKLPGLKNHRFATEQEIVDWFGTPPGYLGPVGTKKPVKVIADRTVANMSDFVVGANEVDYHIAGVNWGRDLPEPEVADVRDVKKGDPSPDGKGTIDICRGIEVGHVFQLGTKYSEAMGATFLDESGKPQPMLMGCYGVGVTRILGAAIEQNFDDRGIIWPESIAPFEVVLCPMGYDRSDMVREAADKLYAELAAAGIDVILDDRGERPGVMFADWELIGVPHRLVIGERGLKEGKIEYQGRRDAEATLLPADEAAATVTEKIRAALAH.

The protein belongs to the class-II aminoacyl-tRNA synthetase family. ProS type 1 subfamily. Homodimer.

The protein localises to the cytoplasm. It catalyses the reaction tRNA(Pro) + L-proline + ATP = L-prolyl-tRNA(Pro) + AMP + diphosphate. Catalyzes the attachment of proline to tRNA(Pro) in a two-step reaction: proline is first activated by ATP to form Pro-AMP and then transferred to the acceptor end of tRNA(Pro). As ProRS can inadvertently accommodate and process non-cognate amino acids such as alanine and cysteine, to avoid such errors it has two additional distinct editing activities against alanine. One activity is designated as 'pretransfer' editing and involves the tRNA(Pro)-independent hydrolysis of activated Ala-AMP. The other activity is designated 'posttransfer' editing and involves deacylation of mischarged Ala-tRNA(Pro). The misacylated Cys-tRNA(Pro) is not edited by ProRS. This Burkholderia ambifaria (strain MC40-6) protein is Proline--tRNA ligase.